The sequence spans 226 residues: Apoptosis regulator OPG045 (226 aa).

The protein belongs to the orthopoxvirus OPG045 family. Homodimer. Interacts with host pro-apoptotic protein BCL2L11 (via BH3 domain). Interacts with host NLRP1. Interacts with host BAK.

It localises to the host mitochondrion outer membrane. It is found in the host cytoplasm. Its function is as follows. Plays a role in evading host innate immune response by inhibiting host inflammasome activation. Interacts with and inhibits NLR-mediated interleukin-1 beta/IL1B production in infected cells. At the host mitochondria outer membrane, interacts with the BH3 domain of host BAK and prevents BAK from binding active BAX. In turn, host apoptosis is inhibited. In Homo sapiens (Human), this protein is Apoptosis regulator OPG045 (OPG045).